A 1195-amino-acid chain; its full sequence is EST/SMG-like protein 2 (1195 aa).

Polar residues-rich tracts occupy residues 1 to 10 (MPETSVQNPL), 18 to 35 (TRSMFLSASQQQRPSATP), and 55 to 68 (VLNPSSKRQNSNSV). 4 disordered regions span residues 1-38 (MPETSVQNPLRLSENENTRSMFLSASQQQRPSATPSFP), 55-130 (VLNP…VGIT), 179-268 (SKSE…PASN), and 610-643 (DKKERKKSSNNDSSVTESSTGNSRNDNEDDDEIM). 2 stretches are compositionally biased toward basic and acidic residues: residues 83 to 109 (RFSDIEGKNNDHTYPERTTVKESEKNP) and 197 to 208 (INDKDNSARDQD). 2 stretches are compositionally biased toward low complexity: residues 210-252 (NNSG…NNSD) and 619-629 (NNDSSVTESST). Positions 1025–1164 (TYFVFDATSW…LISDDDAMKK (140 aa)) constitute a PINc domain.

In terms of assembly, transiently interacts with PEX14.

Its subcellular location is the cytoplasm. The protein localises to the nucleus. It is found in the peroxisome. May be involved in the regulation of gene expression responses of environment-sensing pathways. In Saccharomyces cerevisiae (strain ATCC 204508 / S288c) (Baker's yeast), this protein is EST/SMG-like protein 2.